We begin with the raw amino-acid sequence, 57 residues long: Ribosome modulation factor 1 (57 aa).

The segment covering 1–14 (MKRQKRDRQSRAHT) has biased composition (basic residues). The tract at residues 1–24 (MKRQKRDRQSRAHTRGYQAGISGR) is disordered.

It belongs to the ribosome modulation factor family.

It localises to the cytoplasm. Its function is as follows. During stationary phase, converts 70S ribosomes to an inactive dimeric form (100S ribosomes). This Colwellia psychrerythraea (strain 34H / ATCC BAA-681) (Vibrio psychroerythus) protein is Ribosome modulation factor 1.